The chain runs to 134 residues: UPF0719 transmembrane protein YshE (134 aa).

Helical transmembrane passes span 10-30 (VEIA…LTVF), 48-68 (AVAM…QHSI), 78-98 (IGWG…FEFL), and 114-134 (AVGF…AAGI).

This sequence belongs to the UPF0719 family.

It is found in the cell membrane. The sequence is that of UPF0719 transmembrane protein YshE (yshE) from Bacillus subtilis (strain 168).